A 177-amino-acid chain; its full sequence is Large ribosomal subunit protein uL6 (177 aa).

This sequence belongs to the universal ribosomal protein uL6 family. As to quaternary structure, part of the 50S ribosomal subunit.

Functionally, this protein binds to the 23S rRNA, and is important in its secondary structure. It is located near the subunit interface in the base of the L7/L12 stalk, and near the tRNA binding site of the peptidyltransferase center. The chain is Large ribosomal subunit protein uL6 from Ralstonia pickettii (strain 12J).